The primary structure comprises 316 residues: Universal stress protein E (316 aa).

The protein belongs to the universal stress protein A family.

The protein localises to the cytoplasm. Required for resistance to DNA-damaging agents. This is Universal stress protein E (uspE) from Escherichia coli O157:H7.